We begin with the raw amino-acid sequence, 213 residues long: Glutathione S-transferase (213 aa).

Positions 4-81 constitute a GST N-terminal domain; that stretch reads AKPILYGAWI…YLEDKYPQHP (78 aa). Residues 86–211 enclose the GST C-terminal domain; sequence DIKTKGLDLQ…LPQNQPDAPS (126 aa).

This sequence belongs to the GST superfamily. Zeta family.

Its subcellular location is the cytoplasm. It catalyses the reaction RX + glutathione = an S-substituted glutathione + a halide anion + H(+). Its function is as follows. Has a glutathione transferase activity with ethacrynic acid and nitrophenyl acetate. Has low glutathione peroxidase activity with cumene hydroperoxide. The sequence is that of Glutathione S-transferase (GSTZ1) from Triticum aestivum (Wheat).